Reading from the N-terminus, the 392-residue chain is Pectate lyase 3 (392 aa).

The signal sequence occupies residues 1 to 25 (MGIKHCCYILYFTLALVTLLQPVRS). The N-linked (GlcNAc...) asparagine glycan is linked to asparagine 37. Cysteine 54 and cysteine 71 are oxidised to a cystine. Residues aspartate 194, aspartate 218, and aspartate 222 each coordinate Ca(2+). Arginine 270 is an active-site residue.

This sequence belongs to the polysaccharide lyase 1 family. Amb a subfamily. In terms of assembly, monomer. Ca(2+) is required as a cofactor. Post-translationally, the N-terminus is blocked. As to expression, pollen and flowers.

It carries out the reaction Eliminative cleavage of (1-&gt;4)-alpha-D-galacturonan to give oligosaccharides with 4-deoxy-alpha-D-galact-4-enuronosyl groups at their non-reducing ends.. It functions in the pathway glycan metabolism; pectin degradation; 2-dehydro-3-deoxy-D-gluconate from pectin: step 2/5. In terms of biological role, has pectate lyase activity. This is Pectate lyase 3 from Ambrosia artemisiifolia (Common ragweed).